The following is a 37-amino-acid chain: Potassium channel toxin alpha-KTx 1.3 (37 aa).

A Pyrrolidone carboxylic acid modification is found at Gln-1. Cystine bridges form between Cys-7–Cys-28, Cys-13–Cys-33, and Cys-17–Cys-35. An interaction with Ca(2+)-activated K(+) channels region spans residues 26–33 (GKCMGKKC).

The protein belongs to the short scorpion toxin superfamily. Potassium channel inhibitor family. Alpha-KTx 01 subfamily. As to expression, expressed by the venom gland.

It localises to the secreted. Functionally, blocks selectively the high conductance calcium-activated (maxi-K) potassium channels (KCa1.1/KCNMA1). This is Potassium channel toxin alpha-KTx 1.3 from Hottentotta tamulus (Eastern Indian scorpion).